The following is a 537-amino-acid chain: Chaperonin GroEL 3 (537 aa).

ATP is bound by residues T30–P33, D87–T91, G414, D480–L482, and D496.

The protein belongs to the chaperonin (HSP60) family. In terms of assembly, forms a cylinder of 14 subunits composed of two heptameric rings stacked back-to-back. Interacts with the co-chaperonin GroES.

The protein localises to the cytoplasm. It carries out the reaction ATP + H2O + a folded polypeptide = ADP + phosphate + an unfolded polypeptide.. Its function is as follows. Together with its co-chaperonin GroES, plays an essential role in assisting protein folding. The GroEL-GroES system forms a nano-cage that allows encapsulation of the non-native substrate proteins and provides a physical environment optimized to promote and accelerate protein folding. The sequence is that of Chaperonin GroEL 3 from Acaryochloris marina (strain MBIC 11017).